The chain runs to 424 residues: Serine hydroxymethyltransferase 2 (424 aa).

Residues Leu-125 and 129-131 contribute to the (6S)-5,6,7,8-tetrahydrofolate site; that span reads GHL. Lys-234 carries the N6-(pyridoxal phosphate)lysine modification. Glu-250 is a (6S)-5,6,7,8-tetrahydrofolate binding site.

It belongs to the SHMT family. In terms of assembly, homodimer. Pyridoxal 5'-phosphate serves as cofactor.

It localises to the cytoplasm. It catalyses the reaction (6R)-5,10-methylene-5,6,7,8-tetrahydrofolate + glycine + H2O = (6S)-5,6,7,8-tetrahydrofolate + L-serine. It functions in the pathway one-carbon metabolism; tetrahydrofolate interconversion. The protein operates within amino-acid biosynthesis; glycine biosynthesis; glycine from L-serine: step 1/1. Its function is as follows. Catalyzes the reversible interconversion of serine and glycine with tetrahydrofolate (THF) serving as the one-carbon carrier. This reaction serves as the major source of one-carbon groups required for the biosynthesis of purines, thymidylate, methionine, and other important biomolecules. Also exhibits THF-independent aldolase activity toward beta-hydroxyamino acids, producing glycine and aldehydes, via a retro-aldol mechanism. The protein is Serine hydroxymethyltransferase 2 of Burkholderia mallei (strain ATCC 23344).